Reading from the N-terminus, the 269-residue chain is Shikimate dehydrogenase (NADP(+)) (269 aa).

Residues 13 to 15 and Thr-60 contribute to the shikimate site; that span reads SLS. Catalysis depends on Lys-64, which acts as the Proton acceptor. Glu-76 provides a ligand contact to NADP(+). Shikimate-binding residues include Asn-85 and Asp-100. Residues 124–128, 148–153, and Ile-209 each bind NADP(+); these read GAGGA and NRTMSR. Tyr-211 is a binding site for shikimate. An NADP(+)-binding site is contributed by Gly-232. Gln-239 contributes to the shikimate binding site.

The protein belongs to the shikimate dehydrogenase family. In terms of assembly, monomer or homodimer.

It catalyses the reaction shikimate + NADP(+) = 3-dehydroshikimate + NADPH + H(+). It functions in the pathway metabolic intermediate biosynthesis; chorismate biosynthesis; chorismate from D-erythrose 4-phosphate and phosphoenolpyruvate: step 4/7. In terms of biological role, involved in the biosynthesis of the chorismate, which leads to the biosynthesis of aromatic amino acids. Catalyzes the reversible NADPH linked reduction of 3-dehydroshikimate (DHSA) to yield shikimate (SA). It can also use NAD to oxidize shikimate. This chain is Shikimate dehydrogenase (NADP(+)), found in Staphylococcus epidermidis (strain ATCC 35984 / DSM 28319 / BCRC 17069 / CCUG 31568 / BM 3577 / RP62A).